The following is a 377-amino-acid chain: MAVNVNTNVSAMTAQRYLNSASNAQQLSMERLSSGFKINNAKDDAAGLQISNRLNVQSRGLDVAVRNANDGISIAQTAEGAMNETTNILQRMRDLSLQSSNGSNSKADRVAIQEEITALNDELNRIAETTSFGGNKLLNGTFETKSFQIGADNGEAVMLSLNNMRSDNAMMGGKSYQAANGQDKDWTVKAGANDLTITLTDKRTGEQTINLSAKDGDDIEELATYINGQTDMLKASVDDEGKLQIFTDSNRIDGVATFGGSLAGELSFQAAKDVTVDTIDVTSVGGSQESVAIVDAALQFVDSHRAQLGAFQNRFNHAINNLDNINENVNASKSRIKDTDFAKETTALTKSQILSQASSSVLAQAKQAPNAALGLLG.

Coiled coils occupy residues 103–129 (SNSK…IAET) and 301–340 (VDSH…KDTD).

It belongs to the bacterial flagellin family. Heteromer of multiple flagellin subunits including FlaA, FlaB, FlaC, FlaD and possibly FlaE.

Its subcellular location is the secreted. The protein localises to the bacterial flagellum. Functionally, flagellin is the subunit protein which polymerizes to form the filaments of bacterial flagella. FlaC is not essential for flagellar synthesis and motility. This is Flagellin C (flaC) from Vibrio anguillarum (Listonella anguillarum).